An 87-amino-acid chain; its full sequence is Large ribosomal subunit protein bL28 (87 aa).

It belongs to the bacterial ribosomal protein bL28 family.

The chain is Large ribosomal subunit protein bL28 from Methylacidiphilum infernorum (isolate V4) (Methylokorus infernorum (strain V4)).